The chain runs to 253 residues: MRQIIIAGNWKMNTTLSEACTLVQSMKCELERIEGIEKIICPPFISLYPIKTMLENSSIKLGAQNLFYQEKGAYTGEISPLMLKELCQYVIIGHSERRAYFGETGQVVNQKIKAALQAGLLPIVCVGEKPEENENGQTRQVLETQLKEALDGLNLSCIIIAYEPIWAIGTGKAATASEANSAIGYIRRVLGDTLGNAAAQTSPILYGGSVNEKNITEILSQTNIDGALVGGASLKAESFVSICRQAAVIQNKH.

9–11 (NWK) serves as a coordination point for substrate. The active-site Electrophile is the His-94. Glu-163 serves as the catalytic Proton acceptor. Substrate is bound by residues Gly-169, Ser-209, and 230 to 231 (GG).

Belongs to the triosephosphate isomerase family. Homodimer.

The protein resides in the cytoplasm. The catalysed reaction is D-glyceraldehyde 3-phosphate = dihydroxyacetone phosphate. Its pathway is carbohydrate biosynthesis; gluconeogenesis. It participates in carbohydrate degradation; glycolysis; D-glyceraldehyde 3-phosphate from glycerone phosphate: step 1/1. Involved in the gluconeogenesis. Catalyzes stereospecifically the conversion of dihydroxyacetone phosphate (DHAP) to D-glyceraldehyde-3-phosphate (G3P). The protein is Triosephosphate isomerase of Dehalococcoides mccartyi (strain ATCC BAA-2100 / JCM 16839 / KCTC 5957 / BAV1).